Here is a 354-residue protein sequence, read N- to C-terminus: Histidinol-phosphate aminotransferase (354 aa).

The span at 1 to 11 (MKSFLSDKAKS) shows a compositional bias: basic and acidic residues. The tract at residues 1–33 (MKSFLSDKAKSIEPYTPGEQPKDKNYIKLNTNE) is disordered. Lys211 carries the N6-(pyridoxal phosphate)lysine modification.

It belongs to the class-II pyridoxal-phosphate-dependent aminotransferase family. Histidinol-phosphate aminotransferase subfamily. Homodimer. Pyridoxal 5'-phosphate serves as cofactor.

It catalyses the reaction L-histidinol phosphate + 2-oxoglutarate = 3-(imidazol-4-yl)-2-oxopropyl phosphate + L-glutamate. It participates in amino-acid biosynthesis; L-histidine biosynthesis; L-histidine from 5-phospho-alpha-D-ribose 1-diphosphate: step 7/9. In Brachyspira hyodysenteriae (strain ATCC 49526 / WA1), this protein is Histidinol-phosphate aminotransferase.